Consider the following 430-residue polypeptide: Tyrosine--tRNA ligase (430 aa).

Tyr-32 is a binding site for L-tyrosine. A 'HIGH' region motif is present at residues Pro-37–His-46. Residues Tyr-172 and Gln-176 each coordinate L-tyrosine. The 'KMSKS' region motif lies at Lys-232 to Thr-236. Lys-235 contributes to the ATP binding site. Residues Val-362–Ala-429 form the S4 RNA-binding domain.

The protein belongs to the class-I aminoacyl-tRNA synthetase family. TyrS type 1 subfamily. In terms of assembly, homodimer.

The protein localises to the cytoplasm. It catalyses the reaction tRNA(Tyr) + L-tyrosine + ATP = L-tyrosyl-tRNA(Tyr) + AMP + diphosphate + H(+). Catalyzes the attachment of tyrosine to tRNA(Tyr) in a two-step reaction: tyrosine is first activated by ATP to form Tyr-AMP and then transferred to the acceptor end of tRNA(Tyr). In Bacteroides thetaiotaomicron (strain ATCC 29148 / DSM 2079 / JCM 5827 / CCUG 10774 / NCTC 10582 / VPI-5482 / E50), this protein is Tyrosine--tRNA ligase.